The chain runs to 595 residues: Anthranilate synthase alpha subunit 1, chloroplastic (595 aa).

The N-terminal 54 residues, 1-54, are a transit peptide targeting the chloroplast; the sequence is MSSSMNVATMQALTFSRRLLPSVASRYLSSSSVTVTGYSGRSSAYAPSFRSIKC. The residue at position 55 (Val55) is an N-acetylvaline. Residues Ser115 and 356–358 contribute to the L-tryptophan site; that span reads PYM. 391–392 lines the chorismate pocket; it reads GT. Glu418 contributes to the Mg(2+) binding site. Chorismate contacts are provided by residues Tyr506, Arg526, 558–560, and Gly560; that span reads GAG. Glu573 contacts Mg(2+).

This sequence belongs to the anthranilate synthase component I family. In terms of assembly, heterotetramer consisting of two non-identical subunits: a beta subunit and a large alpha subunit. Mg(2+) serves as cofactor. As to expression, expressed in the central cylinder of mature primary root zones, including pericycle and early lateral root primordia, and vasculature of cotyledons.

The protein localises to the plastid. The protein resides in the chloroplast. It carries out the reaction chorismate + L-glutamine = anthranilate + pyruvate + L-glutamate + H(+). It functions in the pathway amino-acid biosynthesis; L-tryptophan biosynthesis; L-tryptophan from chorismate: step 1/5. With respect to regulation, feedback inhibition by tryptophan. Its function is as follows. Part of a heterotetrameric complex that catalyzes the two-step biosynthesis of anthranilate, an intermediate in the biosynthesis of L-tryptophan. In the first step, the glutamine-binding beta subunit of anthranilate synthase (AS) provides the glutamine amidotransferase activity which generates ammonia as a substrate that, along with chorismate, is used in the second step, catalyzed by the large alpha subunit of AS to produce anthranilate. Plays an important regulatory role in auxin production via the tryptophan-dependent biosynthetic pathway. The protein is Anthranilate synthase alpha subunit 1, chloroplastic (ASA1) of Arabidopsis thaliana (Mouse-ear cress).